A 285-amino-acid polypeptide reads, in one-letter code: Bifunctional protein FolD (285 aa).

Residues 163-165 and S188 contribute to the NADP(+) site; that span reads GRS.

This sequence belongs to the tetrahydrofolate dehydrogenase/cyclohydrolase family. As to quaternary structure, homodimer.

The enzyme catalyses (6R)-5,10-methylene-5,6,7,8-tetrahydrofolate + NADP(+) = (6R)-5,10-methenyltetrahydrofolate + NADPH. The catalysed reaction is (6R)-5,10-methenyltetrahydrofolate + H2O = (6R)-10-formyltetrahydrofolate + H(+). The protein operates within one-carbon metabolism; tetrahydrofolate interconversion. Catalyzes the oxidation of 5,10-methylenetetrahydrofolate to 5,10-methenyltetrahydrofolate and then the hydrolysis of 5,10-methenyltetrahydrofolate to 10-formyltetrahydrofolate. The polypeptide is Bifunctional protein FolD (Lactococcus lactis subsp. cremoris (strain MG1363)).